The primary structure comprises 55 residues: Conotoxin Cal22b (55 aa).

A propeptide spanning residues 1 to 5 (GRPSA) is cleaved from the precursor.

Contains 4 disulfide bonds. As to expression, expressed by the venom duct.

It localises to the secreted. Probable neurotoxin with unknown target. Possibly targets ion channels. This is Conotoxin Cal22b from Californiconus californicus (California cone).